The chain runs to 784 residues: Homoaconitase, mitochondrial (784 aa).

A mitochondrion-targeting transit peptide spans 1-32 (MIHPVRRALAVAASRAPRQFLAAASRTTSVRS). [4Fe-4S] cluster is bound by residues C399, C468, and C471. The tract at residues 572-596 (EAGLTPESTSSSSSSSSSSEEESLT) is disordered. Positions 578–589 (ESTSSSSSSSSS) are enriched in low complexity.

This sequence belongs to the aconitase/IPM isomerase family. The cofactor is [4Fe-4S] cluster.

Its subcellular location is the mitochondrion. It carries out the reaction (2R,3S)-homoisocitrate = cis-homoaconitate + H2O. Its pathway is amino-acid biosynthesis; L-lysine biosynthesis via AAA pathway; L-alpha-aminoadipate from 2-oxoglutarate: step 3/5. In terms of biological role, catalyzes the reversible hydration of cis-homoaconitate to (2R,3S)-homoisocitrate, a step in the alpha-aminoadipate pathway for lysine biosynthesis. This chain is Homoaconitase, mitochondrial (lys-4), found in Neurospora crassa (strain ATCC 24698 / 74-OR23-1A / CBS 708.71 / DSM 1257 / FGSC 987).